Consider the following 145-residue polypeptide: Photosystem I reaction center subunit XI (145 aa).

The next 3 membrane-spanning stretches (helical) occupy residues 48 to 68 (LEIGMAHGYFLIGPFYILGPL), 75 to 95 (LLVGLFSAFGLILILTLGLTI), and 125 to 145 (IGAFGGASVAYVLLDNISFFA).

This sequence belongs to the PsaL family.

It is found in the plastid. It localises to the chloroplast thylakoid membrane. The polypeptide is Photosystem I reaction center subunit XI (Emiliania huxleyi (Coccolithophore)).